A 546-amino-acid polypeptide reads, in one-letter code: Chaperonin GroEL (546 aa).

ATP contacts are provided by residues 30-33, K51, 87-91, G415, and D497; these read TLGP and DGTTT. A disordered region spans residues 527-546; the sequence is PKKDSPAPAMPGGGMGGMDF. Positions 537–546 are enriched in gly residues; that stretch reads PGGGMGGMDF.

It belongs to the chaperonin (HSP60) family. Forms a cylinder of 14 subunits composed of two heptameric rings stacked back-to-back. Interacts with the co-chaperonin GroES.

The protein localises to the cytoplasm. The enzyme catalyses ATP + H2O + a folded polypeptide = ADP + phosphate + an unfolded polypeptide.. Together with its co-chaperonin GroES, plays an essential role in assisting protein folding. The GroEL-GroES system forms a nano-cage that allows encapsulation of the non-native substrate proteins and provides a physical environment optimized to promote and accelerate protein folding. The protein is Chaperonin GroEL of Methylorubrum populi (strain ATCC BAA-705 / NCIMB 13946 / BJ001) (Methylobacterium populi).